The following is a 149-amino-acid chain: Alpha-crystallin A chain (149 aa).

In terms of domain architecture, sHSP spans 41 to 149 (LFRTVLESGI…DTSYSERPIP (109 aa)). 3 residues coordinate Zn(2+): histidine 89, glutamate 91, and histidine 96.

Belongs to the small heat shock protein (HSP20) family. Heteropolymer composed of three CRYAA and one CRYAB subunits. Inter-subunit bridging via zinc ions enhances stability, which is crucial as there is no protein turn over in the lens. Zinc coordination is achieved at least by His-89, Glu-91 and His-96. His-83 and Glu-85 come from the same molecule within the oligomer, while His-90 residue is provided by another molecule. Can also form homodimers and homotetramers (dimers of dimers) which serve as the building blocks of homooligomers.

The protein localises to the cytoplasm. Its subcellular location is the nucleus. Functionally, contributes to the transparency and refractive index of the lens. May act as a chaperone, preventing aggregation of various proteins under a wide range of stress conditions. This chain is Alpha-crystallin A chain (CRYAA), found in Trachemys scripta elegans (Red-eared slider turtle).